The chain runs to 1305 residues: RNA-directed RNA polymerase (1305 aa).

In terms of domain architecture, RdRp catalytic spans 563-814 (IIVGDLEATG…KTLIAPFSVE (252 aa)).

Belongs to the reoviridae RNA-directed RNA polymerase family.

It carries out the reaction RNA(n) + a ribonucleoside 5'-triphosphate = RNA(n+1) + diphosphate. This African horse sickness virus (AHSV) protein is RNA-directed RNA polymerase (Segment-1).